The chain runs to 107 residues: Proteinase inhibitor I-A (107 aa).

The N-terminal stretch at 1 to 22 is a signal peptide; it reads MVKFAHVVAFLLLASLIQPLTA. Residues 23–36 constitute a propeptide that is removed on maturation; sequence RDLEINVLQLDVSQ.

The protein belongs to the protease inhibitor I13 (potato type I serine protease inhibitor) family.

It localises to the secreted. This Nicotiana tabacum (Common tobacco) protein is Proteinase inhibitor I-A (TIMPB).